A 538-amino-acid chain; its full sequence is Chaperonin GroEL (538 aa).

Residues 29–32 (TLGP), 86–90 (DGTTT), glycine 413, 476–478 (NAA), and aspartate 492 each bind ATP.

This sequence belongs to the chaperonin (HSP60) family. As to quaternary structure, forms a cylinder of 14 subunits composed of two heptameric rings stacked back-to-back. Interacts with the co-chaperonin GroES.

It localises to the cytoplasm. The catalysed reaction is ATP + H2O + a folded polypeptide = ADP + phosphate + an unfolded polypeptide.. Together with its co-chaperonin GroES, plays an essential role in assisting protein folding. The GroEL-GroES system forms a nano-cage that allows encapsulation of the non-native substrate proteins and provides a physical environment optimized to promote and accelerate protein folding. In Bacillus sp. (strain PS3), this protein is Chaperonin GroEL.